We begin with the raw amino-acid sequence, 872 residues long: MKQLSSAQVRQMWLDFWATKGHSVEPSVSLVPVNDPTLLWINSGVATLKKYFDGTIIPENPRITNAQKAIRTNDIENVGKTARHHTMFEMLGNFSIGDYFRDEAITWAYELLTSPEWFDFPAEKLYMTYYPDDKDSYNRWIEVGVDPSHLIPIEDNFWEIGAGPSGPDTEIFFDRGEAFDPENIGLRLLAEDIENDRYIEIWNIVLSQFNADPAVPRSEYKELPHKNIDTGAGLERLVAVIQGAKTNFETDLFMPIIREVEKLSGKVYDQDGDNMSFKVIADHIRSLSFAIGDGALPGNEGRGYVLRRLLRRASMHGQKLGINEPFLYKLVPTVGKIMESYYPEVLEKRDFIEKIVKSEEESFARTLHSGQHFAQGIVADLKEKGQSVIAGSDVFKLYDTYGFPVELTEEIAEEAGMTVDREGFEAAMKEQQERARASAVKGGSMGMQNETLQNITVESVFNYNASQLSSKLVAIVADNAEVGAVSEGTASLIFAETSFYAEMGGQVADYGQILDESGKVVATVTNVQKAPNGQALHTVEVLAPLALNQEYTLAIDSNRRHRVMKNHTATHLLHAALHNILGNHATQAGSLNEVEFLRFDFTHFQAVTAEELRAIEQQVNEKIWEALEVKTVETDIDTAKEMGAMALFGEKYGKEVRVVTIGDYSIELCGGTHVDNTSEIGLFKIVKEEGIGSGTRRILAVTGKEAFEAYREQEDALKAIAATLKAPQVKEVPHKVEGLQEQLRQLQKENAELKEKAAAAAAGDIFKDVKEVNGHRYIASQVSVSDAGALRTFADNWKQKDYSDLLVLVAAIGDKVNVLVASKTKDLHAGNLVKELAPIIDGRGGGKPDMAMAGGSNQPKIQELLDAVAGKL.

H567, H571, C669, and H673 together coordinate Zn(2+).

It belongs to the class-II aminoacyl-tRNA synthetase family. It depends on Zn(2+) as a cofactor.

Its subcellular location is the cytoplasm. It carries out the reaction tRNA(Ala) + L-alanine + ATP = L-alanyl-tRNA(Ala) + AMP + diphosphate. In terms of biological role, catalyzes the attachment of alanine to tRNA(Ala) in a two-step reaction: alanine is first activated by ATP to form Ala-AMP and then transferred to the acceptor end of tRNA(Ala). Also edits incorrectly charged Ser-tRNA(Ala) and Gly-tRNA(Ala) via its editing domain. The protein is Alanine--tRNA ligase of Streptococcus pneumoniae serotype 4 (strain ATCC BAA-334 / TIGR4).